We begin with the raw amino-acid sequence, 134 residues long: MVDARHATGQHGEDEAAALLQRTGHRIIARNWRHGGLELDIICETGDTIVFVEVKTRAAHGLTSPTDALTHQKRHRLIRAARAWLAAADAWDRACRFDLVCVTQRGATCTLEHITDAFDLTETLGGGDTSWQPW.

The protein belongs to the UPF0102 family.

The polypeptide is UPF0102 protein Dvul_2148 (Nitratidesulfovibrio vulgaris (strain DP4) (Desulfovibrio vulgaris)).